Reading from the N-terminus, the 222-residue chain is Peroxiredoxin (222 aa).

Residues 7-163 (PRLGEPAPAF…VIRLVDALQT (157 aa)) enclose the Thioredoxin domain. Cys-49 functions as the Cysteine sulfenic acid (-SOH) intermediate in the catalytic mechanism. Arg-126 lines the substrate pocket. Cys-212 and Cys-218 are oxidised to a cystine.

This sequence belongs to the peroxiredoxin family. Prx6 subfamily. Homodecamer. Pentamer of dimers that assemble into a ring structure.

Its subcellular location is the cytoplasm. The enzyme catalyses a hydroperoxide + [thioredoxin]-dithiol = an alcohol + [thioredoxin]-disulfide + H2O. Its function is as follows. Thiol-specific peroxidase that catalyzes the reduction of hydrogen peroxide and organic hydroperoxides to water and alcohols, respectively. Plays a role in cell protection against oxidative stress by detoxifying peroxides. This Aquifex aeolicus (strain VF5) protein is Peroxiredoxin.